The chain runs to 183 residues: MSRIGKLPISIPAGVTVSHKDEIVTVKGPKGELSQYVDPRITVVIEGGMIHLERKTDDRIERSLHGLYRSLINNMVQGVSAGFKRELELVGVGYRASNQGQLLELSLGFTHSIFMQLPKEVTVETKSERNKNPLIILESADKQLLGQVCMKIRSFRKPEPYKGKGVKFVGEQIRRKSGKSAGK.

This sequence belongs to the universal ribosomal protein uL6 family. In terms of assembly, part of the 50S ribosomal subunit.

This protein binds to the 23S rRNA, and is important in its secondary structure. It is located near the subunit interface in the base of the L7/L12 stalk, and near the tRNA binding site of the peptidyltransferase center. The sequence is that of Large ribosomal subunit protein uL6 from Porphyromonas gingivalis (strain ATCC 33277 / DSM 20709 / CIP 103683 / JCM 12257 / NCTC 11834 / 2561).